The following is a 188-amino-acid chain: dCTP deaminase (188 aa).

DCTP is bound by residues 111 to 116, 135 to 137, Gln156, Tyr170, and Gln180; these read KSTYAR and TLE. Catalysis depends on Glu137, which acts as the Proton donor/acceptor.

It belongs to the dCTP deaminase family. As to quaternary structure, homotrimer.

It carries out the reaction dCTP + H2O + H(+) = dUTP + NH4(+). Its pathway is pyrimidine metabolism; dUMP biosynthesis; dUMP from dCTP (dUTP route): step 1/2. Functionally, catalyzes the deamination of dCTP to dUTP. This Aromatoleum aromaticum (strain DSM 19018 / LMG 30748 / EbN1) (Azoarcus sp. (strain EbN1)) protein is dCTP deaminase.